The sequence spans 247 residues: ATP synthase subunit a, chloroplastic (247 aa).

Transmembrane regions (helical) follow at residues 38–58 (QVLI…TIAV), 95–115 (VPFI…GALL), 134–154 (INTT…AGLT), 199–219 (LVVV…VMFL), and 220–240 (GLFT…AYIG).

Belongs to the ATPase A chain family. In terms of assembly, F-type ATPases have 2 components, CF(1) - the catalytic core - and CF(0) - the membrane proton channel. CF(1) has five subunits: alpha(3), beta(3), gamma(1), delta(1), epsilon(1). CF(0) has four main subunits: a, b, b' and c.

Its subcellular location is the plastid. It is found in the chloroplast thylakoid membrane. Its function is as follows. Key component of the proton channel; it plays a direct role in the translocation of protons across the membrane. This Panax ginseng (Korean ginseng) protein is ATP synthase subunit a, chloroplastic.